A 765-amino-acid polypeptide reads, in one-letter code: Palmitoyltransferase ZDHHC8 (765 aa).

Over 1 to 13 (MPRSPGTRLKPAK) the chain is Cytoplasmic. A helical membrane pass occupies residues 14 to 34 (YIPVATAAALLVGSSTLFFVF). Over 35-52 (TCPWLTRAVSPAVPVYNG) the chain is Lumenal. Residues 53-73 (IIFLFVLANFSMATFMDPGVF) traverse the membrane as a helical segment. The Cytoplasmic portion of the chain corresponds to 74 to 148 (PRADEDEDKE…NCIGRRNYRY (75 aa)). Residues 104 to 154 (KWCATCHFYRPPRCSHCSVCDNCVEDFDHHCPWVNNCIGRRNYRYFFLFLL) enclose the DHHC domain. The active-site S-palmitoyl cysteine intermediate is the Cys-134. A helical membrane pass occupies residues 149–169 (FFLFLLSLSAHMVGVVAFGLV). Topologically, residues 170–190 (YVLNHAEGLGAAHTTITMAVM) are lumenal. A helical transmembrane segment spans residues 191 to 211 (CVAGLFFIPVIGLTGFHVVLV). Over 212 to 765 (TRGRTTNEHV…VGGTTYEISV (554 aa)) the chain is Cytoplasmic. A disordered region spans residues 290 to 386 (LKAGLGRSKS…PGPDSLTLGE (97 aa)). Residues 301-311 (GSLDRLDEKPL) are compositionally biased toward basic and acidic residues. The span at 333–348 (PRPSSAESALSAQRTS) shows a compositional bias: polar residues. Residue Ser-337 is modified to Phosphoserine. Arg-441 is modified (omega-N-methylarginine). Residues 447–542 (ALQPLRSEGG…PREPSPVRYD (96 aa)) form a disordered region. Phosphoserine is present on residues Ser-606 and Ser-627. Positions 630 to 747 (SLSSAVSRAP…PGPSASPARH (118 aa)) are disordered. Residues 639–655 (PRTSSSSLQADLANNNA) are compositionally biased toward polar residues. Pro residues predominate over residues 671–680 (QGPPSPPSTP). Phosphoserine occurs at positions 675, 682, 725, and 743.

Belongs to the DHHC palmitoyltransferase family. ERF2/ZDHHC9 subfamily.

It is found in the golgi apparatus membrane. The protein localises to the mitochondrion membrane. It carries out the reaction L-cysteinyl-[protein] + hexadecanoyl-CoA = S-hexadecanoyl-L-cysteinyl-[protein] + CoA. Its function is as follows. Palmitoyltransferase that catalyzes the addition of palmitate onto various protein substrates and therefore functions in several unrelated biological processes. Through the palmitoylation of ABCA1 regulates the localization of the transporter to the plasma membrane and thereby regulates its function in cholesterol and phospholipid efflux. Could also pamitoylate the D(2) dopamine receptor DRD2 and regulate its stability and localization to the plasma membrane. Could also play a role in glutamatergic transmission. The chain is Palmitoyltransferase ZDHHC8 from Canis lupus familiaris (Dog).